We begin with the raw amino-acid sequence, 349 residues long: MEIYTSDNYSEEVGSGDYDSNKEPCFRDENENFNRIFLPTIYFIIFLTGIVGNGLVILVMGYQKKLRSMTDKYRLHLSVADLLFVITLPFWAVDAMADWYFGKFLCKAVHIIYTVNLYSSVLILAFISLDRYLAIVHATNSQRPRKLLAEKAVYVGVWIPALLLTIPDIIFADVSQGDGRYICDRLYPDSLWMVVFQFQHIMVGLILPGIVILSCYCIIISKLSHSKGHQKRKALKTTVILILAFFACWLPYYVGISIDSFILLEVIKQGCEFESVVHKWISITEALAFFHCCLNPILYAFLGAKFKSSAQHALNSMSRGSSLKILSKGKRGGHSSVSTESESSSFHSS.

The interval 1–18 (MEIYTSDNYSEEVGSGDY) is important for chemokine binding and signaling. Residues 1–23 (MEIYTSDNYSEEVGSGDYDSNKE) are disordered. At 1-35 (MEIYTSDNYSEEVGSGDYDSNKEPCFRDENENFNR) the chain is on the extracellular side. An N-linked (GlcNAc...) asparagine glycan is attached at Asn8. Position 9 is a sulfotyrosine (Tyr9). Residue Ser15 is glycosylated (O-linked (Xyl...) (chondroitin sulfate) serine). Position 18 is a sulfotyrosine (Tyr18). 2 disulfide bridges follow: Cys25/Cys271 and Cys106/Cys183. Residues 36 to 60 (IFLPTIYFIIFLTGIVGNGLVILVM) traverse the membrane as a helical segment. The Cytoplasmic segment spans residues 61–74 (GYQKKLRSMTDKYR). The helical transmembrane segment at 75–96 (LHLSVADLLFVITLPFWAVDAM) threads the bilayer. The segment at 91–94 (WAVD) is chemokine binding. Over 97–107 (ADWYFGKFLCK) the chain is Extracellular. Residues 108–127 (AVHIIYTVNLYSSVLILAFI) form a helical membrane-spanning segment. Residues 110-114 (HIIYT) are chemokine binding. Over 128-151 (SLDRYLAIVHATNSQRPRKLLAEK) the chain is Cytoplasmic. The Important for signaling signature appears at 130–132 (DRY). The tract at residues 132–144 (YLAIVHATNSQRP) is involved in dimerization; when bound to chemokine. A helical transmembrane segment spans residues 152–171 (AVYVGVWIPALLLTIPDIIF). Over 172–192 (ADVSQGDGRYICDRLYPDSLW) the chain is Extracellular. The tract at residues 183-187 (CDRLY) is chemokine binding, important for signaling. The interval 188–207 (PDSLWMVVFQFQHIMVGLIL) is involved in dimerization. Residues 193–213 (MVVFQFQHIMVGLILPGIVIL) traverse the membrane as a helical segment. The Cytoplasmic portion of the chain corresponds to 214-238 (SCYCIIISKLSHSKGHQKRKALKTT). Residues 239–258 (VILILAFFACWLPYYVGISI) traverse the membrane as a helical segment. Topologically, residues 259–279 (DSFILLEVIKQGCEFESVVHK) are extracellular. Positions 263–265 (LLE) are involved in dimerization. A helical transmembrane segment spans residues 280-299 (WISITEALAFFHCCLNPILY). Residues 300–349 (AFLGAKFKSSAQHALNSMSRGSSLKILSKGKRGGHSSVSTESESSSFHSS) are Cytoplasmic-facing. Ser316 and Ser318 each carry phosphoserine. Residues Ser321 and Ser322 each carry the phosphoserine; by PKC and GRK6 modification. Residues 325 to 349 (ILSKGKRGGHSSVSTESESSSFHSS) form a disordered region. A Phosphoserine; by GRK6 modification is found at Ser327. Lys328 is covalently cross-linked (Glycyl lysine isopeptide (Lys-Gly) (interchain with G-Cter in ubiquitin)). Residues 334 to 349 (HSSVSTESESSSFHSS) show a composition bias toward low complexity. Ser336 bears the Phosphoserine; by GRK6 mark. A phosphoserine mark is found at Ser345 and Ser348.

It belongs to the G-protein coupled receptor 1 family. As to quaternary structure, monomer. Can form homodimers. Interacts with CD164. Interacts with ARRB2; the interaction is dependent on the C-terminal phosphorylation of CXCR4 and allows activation of MAPK1 and MAPK3. Interacts with ARR3; the interaction is dependent on the C-terminal phosphorylation of CXCR4 and modulates calcium mobilization. Interacts with RNF113A; the interaction, enhanced by CXCL12, promotes CXCR4 ubiquitination and subsequent degradation. Interacts (via the cytoplasmic C-terminal) with ITCH (via the WW domains I and II); the interaction, enhanced by CXCL12, promotes CXCR4 ubiquitination and leads to its degradation. Interacts with extracellular ubiquitin. Interacts with DBN1; this interaction is enhanced by antigenic stimulation. Following LPS binding, may form a complex with GDF5, HSP90AA1 and HSPA8. In terms of processing, phosphorylated on agonist stimulation. Rapidly phosphorylated on serine and threonine residues in the C-terminal. Phosphorylation at Ser-321 and Ser-322 leads to recruitment of ITCH, ubiquitination and protein degradation. Ubiquitinated after ligand binding, leading to its degradation. Ubiquitinated by ITCH at the cell membrane on agonist stimulation. The ubiquitin-dependent mechanism, endosomal sorting complex required for transport (ESCRT), then targets CXCR4 for lysosomal degradation. This process is dependent also on prior Ser-/Thr-phosphorylation in the C-terminal of CXCR4. Also binding of ARRB1 to STAM negatively regulates CXCR4 sorting to lysosomes though modulating ubiquitination of SFR5S. Post-translationally, sulfation is required for efficient binding of CXCL12/SDF-1alpha and promotes its dimerization. In terms of processing, O- and N-glycosylated. N-glycosylation can mask coreceptor function. The O-glycosylation chondroitin sulfate attachment does not affect interaction with CXCL12/SDF-1alpha nor its coreceptor activity.

The protein localises to the cell membrane. It localises to the cell junction. Its subcellular location is the early endosome. The protein resides in the late endosome. It is found in the lysosome. In terms of biological role, receptor for the C-X-C chemokine CXCL12/SDF-1 that transduces a signal by increasing intracellular calcium ion levels and enhancing MAPK1/MAPK3 activation. Involved in the AKT signaling cascade. Plays a role in regulation of cell migration, e.g. during wound healing. Acts as a receptor for extracellular ubiquitin; leading to enhanced intracellular calcium ions and reduced cellular cAMP levels. Binds bacterial lipopolysaccharide (LPS) et mediates LPS-induced inflammatory response, including TNF secretion by monocytes. Involved in hematopoiesis and in cardiac ventricular septum formation. Also plays an essential role in vascularization of the gastrointestinal tract, probably by regulating vascular branching and/or remodeling processes in endothelial cells. Involved in cerebellar development. In the CNS, could mediate hippocampal-neuron survival. The protein is C-X-C chemokine receptor type 4 (Cxcr4) of Rattus norvegicus (Rat).